The following is a 153-amino-acid chain: Jacalin-related lectin Calsepa (153 aa).

An N-acetylalanine modification is found at A2. Residues 6–152 form the Jacalin-type lectin domain; sequence DTISGPWGNN…VDAIGTYNRH (147 aa). N-glycan binding stretches follow at residues 17-18, 95-96, and 140-144; these read GN, DN, and GYYVD.

The protein belongs to the jacalin lectin family. In terms of assembly, homodimer. Post-translationally, not glycosylated. In terms of tissue distribution, rhizome (at protein level). Detected in the cortex and the pith of rhizome. Not detected in vascular tissues, pericycle, endodermis or rhizodermis.

It is found in the cytoplasm. Hemagglutinating activity is most inhibited by methyl alpha-mannopyranoside. This activity is inhibited to a less extent (about a third of the inhibition of that of methyl alpha-mannopyranoside) by methyl alpha-glucoside, other alpha-glucosides, such as maltose, isomaltose, panose or palatinose, and alpha-glucosides modified at the second position, such as methyl 2-deoxy-alpha-arabinoglucopyranoside or methyl 2-acetamido-2-deoxy alpha-glucopyranoside. Mildly inhibited by free monosaccharides, with glucose presenting at least 20-fold less inhibitory effect on hemagglutinating activity than mannose. Glycoproteins are somewhat inhibitory, the best being asialothyroglobulin and ovomucoid. Not inhibited by isomaltitol, sucrose or trehalose. Its function is as follows. Mannose-binding lectin. Preferentially binds mannose at concentrations ranging between 5 and 25 mM, but also binds glucose. Has a marked preference for methylated sugar derivatives, such as alpha-MeMan and alpha-MeGlc, at concentration down to 5 mM. Binds to N-glycans, but not to glycolipid-type or other type of glycans. Binds N-linked high-mannose-type glycans. Has a preference for smaller (Man(2)-Man(6)) high-mannose-type glycans to larger (Man(7)-Man(9)) ones. Recognizes both alpha1-6 extended and alpha1-3 extended monoantennary glycans. The addition of alpha1-2Man to the Man-alpha1-3Man-beta branch results in a significant loss of affinity, but beta1-2GlcNAc has some affinity. Has less affinity for biantennary glycans. However, affinity is significant for the biantennary complex-type N-glycans with bisecting GlcNAc. No affinity is observed for tri- and tetra-antennary glycans. Binds bisected glycans of the mouse brain. Selectively binds to bisecting N-glycans which are in back-fold conformation, and does not favor a glycan with an extend conformation. Has hemagglutinating activity against rabbit erythrocytes at 0.3 ug/ml and against trypsin-treated human erythrocytes at 5 ug/ml. Has mitogenic activity in murine cells. This chain is Jacalin-related lectin Calsepa, found in Calystegia sepium (Hedge bindweed).